The primary structure comprises 549 residues: Tigger transposable element-derived protein 7 (549 aa).

The HTH psq-type domain maps to 1 to 52 (MNKRGKYTTLNLEEKMKVLSRIEAGRSLKSVMDEFGISKSTFYDIKKNKKLI). 2 DNA-binding regions (H-T-H motif) span residues 28–48 (LKSVMDEFGISKSTFYDIKKN) and 101–132 (VELQAAAERFARCFGRTDFKASTGWLFRFRNR). The region spanning 68-139 (KRKRTTGAKY…RNRHAIGNRK (72 aa)) is the HTH CENPB-type domain. Residues 169 to 399 (LCLAQLYSGD…VKQITIANAW (231 aa)) enclose the DDE-1 domain. Residues 527-549 (FLKPRPHNIKDSFSGPSTSGSNH) are disordered. The segment covering 540–549 (SGPSTSGSNH) has biased composition (polar residues).

The protein belongs to the tigger transposable element derived protein family. Expressed in all tissues tested. Higher expression in testis and ovary.

The protein localises to the nucleus. In Homo sapiens (Human), this protein is Tigger transposable element-derived protein 7 (TIGD7).